Here is a 360-residue protein sequence, read N- to C-terminus: Aminomethyltransferase (360 aa).

This sequence belongs to the GcvT family. As to quaternary structure, the glycine cleavage system is composed of four proteins: P, T, L and H.

It carries out the reaction N(6)-[(R)-S(8)-aminomethyldihydrolipoyl]-L-lysyl-[protein] + (6S)-5,6,7,8-tetrahydrofolate = N(6)-[(R)-dihydrolipoyl]-L-lysyl-[protein] + (6R)-5,10-methylene-5,6,7,8-tetrahydrofolate + NH4(+). In terms of biological role, the glycine cleavage system catalyzes the degradation of glycine. The chain is Aminomethyltransferase from Pseudoalteromonas translucida (strain TAC 125).